Consider the following 533-residue polypeptide: Probable polyamine oxidase 5 (533 aa).

FAD-binding residues include E37, R45, V262, and E501.

This sequence belongs to the flavin monoamine oxidase family. The cofactor is FAD. In terms of tissue distribution, expressed in root vasculature, leaves and stems.

The protein localises to the cytoplasm. It carries out the reaction spermine + O2 + H2O = 3-aminopropanal + spermidine + H2O2. It catalyses the reaction N(1)-acetylspermine + O2 + H2O = 3-acetamidopropanal + spermidine + H2O2. The enzyme catalyses norspermine + O2 + H2O = norspermidine + 3-aminopropanal + H2O2. The catalysed reaction is thermospermine + O2 + H2O = 3-aminopropanal + spermidine + H2O2. Its pathway is amine and polyamine degradation; spermine degradation. Its function is as follows. Flavoenzyme involved in polyamine back-conversion. Catalyzes the oxidation of the secondary amino group of polyamines, such as spermine and its acetyl derivatives. Substrate preference is spermine &gt; N(1)-acetylspermine &gt; thermospermine &gt; norspermine. Plays an important role in the regulation of polyamine intracellular concentration. Involved in xylem differentiation by controlling thermospermine homeostasis, and participating in the tightly controlled interplay between auxin and cytokinin that is necessary for proper xylem differentiation. Involved in the production of hydrogen peroxide in response to salt and cold stresses. The polypeptide is Probable polyamine oxidase 5 (Arabidopsis thaliana (Mouse-ear cress)).